A 396-amino-acid chain; its full sequence is Gap junction gamma-1 protein (396 aa).

The Cytoplasmic portion of the chain corresponds to 1-22 (MSWSFLTRLLEEIHNHSTFVGK). Residues 23 to 45 (IWLTVLIVFRIVLTAVGGESIYY) traverse the membrane as a helical segment. Residues 46-75 (DEQSKFVCNTEQPGCENVCYDAFAPLSHVR) lie on the Extracellular side of the membrane. A helical transmembrane segment spans residues 76-95 (FWVFQIILVATPSVMYLGYA). Residues 96–175 (IHKIAKMEHG…RRIREDGLMK (80 aa)) lie on the Cytoplasmic side of the membrane. Positions 145 to 165 (ELESEKENKEQNQSKPKHDGR) are disordered. The span at 147–156 (ESEKENKEQN) shows a compositional bias: basic and acidic residues. Residues 176-198 (IYVLQLLARTMFEVGFLIGQYFL) form a helical membrane-spanning segment. Topologically, residues 199-228 (YGFQVHPFYVCSRVPCPHKIDCFISRPTEK) are extracellular. The helical transmembrane segment at 229-248 (TIFLLIMYGVTGLCLLLNIW) threads the bilayer. The Cytoplasmic segment spans residues 249–396 (EMLHLGFGTI…SGDGKTSVWI (148 aa)). Positions 357–396 (NHQNNPHGPREKKAKVGSKAGSNKSSASSKSGDGKTSVWI) are disordered. Over residues 373-396 (GSKAGSNKSSASSKSGDGKTSVWI) the composition is skewed to low complexity.

This sequence belongs to the connexin family. Gamma-type subfamily. In terms of assembly, a connexon is composed of a hexamer of connexins. Interacts with CNST.

The protein resides in the cell membrane. Its subcellular location is the cell junction. It localises to the gap junction. Its function is as follows. One gap junction consists of a cluster of closely packed pairs of transmembrane channels, the connexons, through which materials of low MW diffuse from one cell to a neighboring cell. The polypeptide is Gap junction gamma-1 protein (GJC1) (Sus scrofa (Pig)).